Reading from the N-terminus, the 51-residue chain is Basic phospholipase A2 homolog BmatTX-I (51 aa).

The cysteines at positions 28 and 44 are disulfide-linked.

Monomer. As to expression, expressed by the venom gland.

It localises to the secreted. In terms of biological role, snake venom phospholipase A2 homolog that lacks enzymatic activity. Shows high myotoxic activity, neutrophile activation (demonstrated by activation induction of IL-1beta production), slight cytotoxicity against Jurkat (leukemia T) and SK-BR-3 (breast adenocarcinoma) tumor cell lines, and slight antiparasitic activity against promastigote forms of Leishmania amazonensis. A model of myotoxic mechanism has been proposed: an apo Lys49-PLA2 is activated by the entrance of a hydrophobic molecule (e.g. fatty acid) at the hydrophobic channel of the protein leading to a reorientation of a monomer. This reorientation causes a transition between 'inactive' to 'active' states, causing alignment of C-terminal and membrane-docking sites (MDoS) side-by-side and putting the membrane-disruption sites (MDiS) in the same plane, exposed to solvent and in a symmetric position for both monomers. The MDoS region stabilizes the toxin on membrane by the interaction of charged residues with phospholipid head groups. Subsequently, the MDiS region destabilizes the membrane with penetration of hydrophobic residues. This insertion causes a disorganization of the membrane, allowing an uncontrolled influx of ions (i.e. calcium and sodium), and eventually triggering irreversible intracellular alterations and cell death. In Bothrops mattogrossensis (Pitviper), this protein is Basic phospholipase A2 homolog BmatTX-I.